A 1019-amino-acid chain; its full sequence is UPF0182 protein Tery_0938 (1019 aa).

9 helical membrane-spanning segments follow: residues 23-43 (IHILIILFFSFVCWEILGFST), 67-87 (TETWLWITTFLISMGFFLVNL), 128-148 (LSLSWLLCCIFGLILLVGLIL), 192-212 (LWLLGLFLLLSFAIIINPILW), 213-233 (LSVFAVVLSLVFSFILSSHWA), 270-290 (FWLIGLFLYGFVACILIYLLS), 313-333 (LGGGFILTIAFSYFIACFELL), 355-375 (YVFLGILALLIAFFLFWQAIF), and 416-436 (AILTWYLIIAVIAGWLIPKIV).

This sequence belongs to the UPF0182 family.

It localises to the cell membrane. The sequence is that of UPF0182 protein Tery_0938 from Trichodesmium erythraeum (strain IMS101).